Here is a 592-residue protein sequence, read N- to C-terminus: MRSIYCGQLNKTHVDQEVELCGWINKRRDLGGLIFVDLRDREGLVQVVFDSDIEELMSSANTLRQEFCVQLKGIVRARPDSQVNKDMPTGEIEILGTELNIINRSEPLPLDFNQVNSEERRLKYRYLDLRRLEMSDRIKLRAKASSFVRRFLDENGFLDIETPVLTKATPEGARDYLVPSRVHKGSFYALPQSPQLFKQLLMMSGFDRYYQIVKCFRDEDLRADRQPEFTQIDIETSFMSSDQVRGMTEKMIREMWQTLLNVDLGDFPIMPYSEAMSLYGSDKPDLRNPMKLVDIADLVKDVEFNVFSGPANDEKGRVAVLTVPGGAKLSRKQLDDYTKFIGIYGAKGMAWMKVNDHTAGAEGVQSPVAKFLTADVITQLLERTNAQSGDIILFGADKRNTVNEAMGALRVKIGIDLEITNLDSWAPLWVVDFPMFEEDDEGTLHAVHHPFTAPKDMSASELEANPAAAISDAYDMVLNGYEVGGGSVRIHNADMQEAAFRILGINEQEQQDKFGFLLDALKYGTPPHAGLAFGLDRLAMLLCGTDNIRDVIAFPKTTQASCLLTNAPSKPNADSLAELAISVVEKAVLSAE.

E171 serves as a coordination point for L-aspartate. Positions 195 to 198 (QLFK) are aspartate. L-aspartate is bound at residue R217. Residues 217–219 (RDE) and Q226 each bind ATP. Residue H448 coordinates L-aspartate. An ATP-binding site is contributed by E482. R489 serves as a coordination point for L-aspartate. Residue 534-537 (GLDR) coordinates ATP.

This sequence belongs to the class-II aminoacyl-tRNA synthetase family. Type 1 subfamily. Homodimer.

It is found in the cytoplasm. The enzyme catalyses tRNA(Asp) + L-aspartate + ATP = L-aspartyl-tRNA(Asp) + AMP + diphosphate. Its function is as follows. Catalyzes the attachment of L-aspartate to tRNA(Asp) in a two-step reaction: L-aspartate is first activated by ATP to form Asp-AMP and then transferred to the acceptor end of tRNA(Asp). In Pseudoalteromonas translucida (strain TAC 125), this protein is Aspartate--tRNA ligase.